Consider the following 383-residue polypeptide: Subtelomeric hrmA-associated cluster protein AFUB_078970 (383 aa).

Disordered stretches follow at residues 118–145 and 249–318; these read NPVS…KDDD and QATQ…SARP. The segment covering 119–134 has biased composition (low complexity); it reads PVSEVPESPPSTVKSS. One can recognise a Myb-like domain in the interval 318-364; it reads PYSAAEDDILQTLVARGLAWEEIEKEFGLRFAKRTMRSLQMRWSRKL.

In terms of biological role, myb-like domain-containing protein; part of the subtelomeric hrmA-associated cluster (HAC) containing genes that alter the hyphal surface (such as reduced total chitin or increased beta-glucan exposure) and perturb inter-hyphal interactions within the developing biofilms, resulting in a loss of vertically aligned polarized growing filaments. Consequently, this hypoxia-typic morphotype (called H-MORPH) with altered biofilm architecture leads to increased hypoxia fitness, increased host inflammation, rapid disease progression, and mortality in a murine model of invasive aspergillosis. This is Subtelomeric hrmA-associated cluster protein AFUB_078970 from Aspergillus fumigatus (strain CBS 144.89 / FGSC A1163 / CEA10) (Neosartorya fumigata).